The chain runs to 153 residues: Regulatory protein RecX (153 aa).

The protein belongs to the RecX family.

The protein localises to the cytoplasm. In terms of biological role, modulates RecA activity. This chain is Regulatory protein RecX, found in Vibrio vulnificus (strain CMCP6).